The sequence spans 715 residues: Polyribonucleotide nucleotidyltransferase (715 aa).

Mg(2+) is bound by residues Asp-491 and Asp-497. The KH domain occupies 558–617 (PKIMTMTINPEKIRDVIGPQGRVINKIIEETGVKIDIEQDGRVFIASINHEANLRAKQII). The S1 motif domain occupies 627-695 (GQVYLGTVKR…DQGRVNLSRK (69 aa)).

Belongs to the polyribonucleotide nucleotidyltransferase family. It depends on Mg(2+) as a cofactor.

The protein resides in the cytoplasm. The enzyme catalyses RNA(n+1) + phosphate = RNA(n) + a ribonucleoside 5'-diphosphate. Functionally, involved in mRNA degradation. Catalyzes the phosphorolysis of single-stranded polyribonucleotides processively in the 3'- to 5'-direction. The polypeptide is Polyribonucleotide nucleotidyltransferase (Brevibacillus brevis (strain 47 / JCM 6285 / NBRC 100599)).